A 241-amino-acid chain; its full sequence is Xyloglucan-specific endo-beta-1,4-glucanase A (241 aa).

A signal peptide spans 1–16; that stretch reads MKVLALSALLSLASAA. Asn-47 carries an N-linked (GlcNAc...) asparagine glycan.

This sequence belongs to the glycosyl hydrolase 12 (cellulase H) family.

Its subcellular location is the secreted. The catalysed reaction is xyloglucan + H2O = xyloglucan oligosaccharides.. Functionally, catalyzes endohydrolysis of 1,4-beta-D-glucosidic linkages in xyloglucan with retention of the beta-configuration of the glycosyl residues. Specific for xyloglucan and does not hydrolyze other cell wall components. This Aspergillus niger protein is Xyloglucan-specific endo-beta-1,4-glucanase A (xgeA).